The following is a 129-amino-acid chain: Small ribosomal subunit protein uS11 (129 aa).

This sequence belongs to the universal ribosomal protein uS11 family. As to quaternary structure, part of the 30S ribosomal subunit. Interacts with proteins S7 and S18. Binds to IF-3.

Its function is as follows. Located on the platform of the 30S subunit, it bridges several disparate RNA helices of the 16S rRNA. Forms part of the Shine-Dalgarno cleft in the 70S ribosome. The polypeptide is Small ribosomal subunit protein uS11 (Nitratidesulfovibrio vulgaris (strain ATCC 29579 / DSM 644 / CCUG 34227 / NCIMB 8303 / VKM B-1760 / Hildenborough) (Desulfovibrio vulgaris)).